A 1801-amino-acid chain; its full sequence is U3 small nucleolar RNA-associated protein 10 (1801 aa).

The HEAT 1 repeat unit spans residues 582 to 619 (IDFQALVPFVLVALGDVSERIRREAAAVLAALGALYKK). 2 consecutive transmembrane segments (helical) span residues 945 to 965 (IQSG…AIVN) and 1001 to 1021 (ALLL…HSVM). HEAT repeat units follow at residues 1045 to 1082 (QTID…AFEH), 1252 to 1289 (LSLI…QNPE), 1296 to 1334 (NRML…KYGK), and 1757 to 1794 (ALLP…VLGE).

This sequence belongs to the HEATR1/UTP10 family. Component of the ribosomal small subunit (SSU) processome.

It is found in the nucleus. It localises to the nucleolus. The protein localises to the membrane. Involved in nucleolar processing of pre-18S ribosomal RNA. Involved in ribosome biosynthesis. The polypeptide is U3 small nucleolar RNA-associated protein 10 (Aspergillus terreus (strain NIH 2624 / FGSC A1156)).